We begin with the raw amino-acid sequence, 187 residues long: Large ribosomal subunit protein uL5 (187 aa).

The protein belongs to the universal ribosomal protein uL5 family. Part of the 50S ribosomal subunit; part of the 5S rRNA/L5/L18/L25 subcomplex. Contacts the 5S rRNA and the P site tRNA. Forms a bridge to the 30S subunit in the 70S ribosome.

This is one of the proteins that bind and probably mediate the attachment of the 5S RNA into the large ribosomal subunit, where it forms part of the central protuberance. In the 70S ribosome it contacts protein S13 of the 30S subunit (bridge B1b), connecting the 2 subunits; this bridge is implicated in subunit movement. Contacts the P site tRNA; the 5S rRNA and some of its associated proteins might help stabilize positioning of ribosome-bound tRNAs. This chain is Large ribosomal subunit protein uL5, found in Mycobacterium leprae (strain Br4923).